The chain runs to 447 residues: Tubulin beta-2 chain (447 aa).

Positions 11, 69, 138, 142, 143, 144, 204, and 226 each coordinate GTP. Residue Glu69 participates in Mg(2+) binding. The tract at residues 419–447 is disordered; it reads VSEYQQYQDATADDEGEYEDEEEEADLQD. The span at 429-447 shows a compositional bias: acidic residues; that stretch reads TADDEGEYEDEEEEADLQD.

It belongs to the tubulin family. Dimer of alpha and beta chains. A typical microtubule is a hollow water-filled tube with an outer diameter of 25 nm and an inner diameter of 15 nM. Alpha-beta heterodimers associate head-to-tail to form protofilaments running lengthwise along the microtubule wall with the beta-tubulin subunit facing the microtubule plus end conferring a structural polarity. Microtubules usually have 13 protofilaments but different protofilament numbers can be found in some organisms and specialized cells. It depends on Mg(2+) as a cofactor. In terms of tissue distribution, expressed in leaf sheaths and suspension cultured cells.

It is found in the cytoplasm. It localises to the cytoskeleton. Tubulin is the major constituent of microtubules, a cylinder consisting of laterally associated linear protofilaments composed of alpha- and beta-tubulin heterodimers. Microtubules grow by the addition of GTP-tubulin dimers to the microtubule end, where a stabilizing cap forms. Below the cap, tubulin dimers are in GDP-bound state, owing to GTPase activity of alpha-tubulin. This chain is Tubulin beta-2 chain (TUBB2), found in Oryza sativa subsp. japonica (Rice).